Here is a 274-residue protein sequence, read N- to C-terminus: Proteasome subunit beta type-5-A (274 aa).

Positions 1–57 (MKLDTSGFETSMPMIGFGSSSDMLDELSSVPSFDLPRTKEFDGFQKKAKDMLKHAKG) are cleaved as a propeptide — removed in mature form. The active-site Nucleophile is Thr58.

This sequence belongs to the peptidase T1B family. As to quaternary structure, component of the 20S core complex of the 26S proteasome. The 26S proteasome is composed of a core protease (CP), known as the 20S proteasome, capped at one or both ends by the 19S regulatory particle (RP/PA700). The 20S proteasome core is composed of 28 subunits that are arranged in four stacked rings, resulting in a barrel-shaped structure. The two end rings are each formed by seven alpha subunits, and the two central rings are each formed by seven beta subunits. The catalytic chamber with the active sites is on the inside of the barrel. As to expression, ubiquitous low levels, higher expression in siliques and flowers.

It localises to the cytoplasm. The protein localises to the nucleus. It carries out the reaction Cleavage of peptide bonds with very broad specificity.. In terms of biological role, the proteasome is a multicatalytic proteinase complex which is characterized by its ability to cleave peptides with Arg, Phe, Tyr, Leu, and Glu adjacent to the leaving group at neutral or slightly basic pH. The proteasome has an ATP-dependent proteolytic activity. The protein is Proteasome subunit beta type-5-A (PBE1) of Arabidopsis thaliana (Mouse-ear cress).